Reading from the N-terminus, the 1378-residue chain is DNA-directed RNA polymerase subunit beta (1378 aa).

Belongs to the RNA polymerase beta chain family. As to quaternary structure, the RNAP catalytic core consists of 2 alpha, 1 beta, 1 beta' and 1 omega subunit. When a sigma factor is associated with the core the holoenzyme is formed, which can initiate transcription.

It catalyses the reaction RNA(n) + a ribonucleoside 5'-triphosphate = RNA(n+1) + diphosphate. Its function is as follows. DNA-dependent RNA polymerase catalyzes the transcription of DNA into RNA using the four ribonucleoside triphosphates as substrates. This chain is DNA-directed RNA polymerase subunit beta, found in Mesorhizobium japonicum (strain LMG 29417 / CECT 9101 / MAFF 303099) (Mesorhizobium loti (strain MAFF 303099)).